An 86-amino-acid chain; its full sequence is Small ribosomal subunit protein bS20 (86 aa).

A disordered region spans residues 1-21 (MANTKSAIKAARKSLRLHDRN).

It belongs to the bacterial ribosomal protein bS20 family.

Its function is as follows. Binds directly to 16S ribosomal RNA. The protein is Small ribosomal subunit protein bS20 of Opitutus terrae (strain DSM 11246 / JCM 15787 / PB90-1).